The sequence spans 327 residues: RNA ligase 1 (327 aa).

Requires Mg(2+) as cofactor. It depends on Mn(2+) as a cofactor. In terms of processing, AMPylates itself (auto-AMPylation).

The enzyme catalyses ATP + (ribonucleotide)n-3'-hydroxyl + 5'-phospho-(ribonucleotide)m = (ribonucleotide)n+m + AMP + diphosphate.. Functionally, functions as an RNA ligase, in vitro. The ligation reaction entails three nucleotidyl transfer steps. In the first step, the RNA ligase reacts with ATP in the absence of nucleic acid to form a covalent ligase-AMP intermediate and release pyrophosphate. In step 2, the ligase-AMP binds to the nucleic acid and transfers the adenylate to the 5'-PO4 terminus to form an adenylylated intermediate. In step 3, the RNA ligase directs the attack of the 3'-OH on the 5'-phosphoanhydride linkage, resulting in a repaired 3'-5' phosphodiester and release of AMP. Exhibits selectivity for single-stranded RNA substrates and may not have nick-sealing activity on double-stranded DNA-RNA hybrids. May play a role in maintaining RNA integrity under stress conditions, for example in response to reactive oxygen species (ROS). The chain is RNA ligase 1 from Mus musculus (Mouse).